A 259-amino-acid polypeptide reads, in one-letter code: MLPSTSLNSSMYGNGALNSRDAARHTAGAKRYKYLRRLFRFRQMDFEFAAWQMLYLFTSPQRVYRNFHYRKQTKDQWARDDPAFLVLLSIWLCVSTIGFGFVLDMGFFETIKLLLWVVFIDCVGVGLLISTLMWFISNKYLVKRQSRDYDVEWGYAFDVHLNAFYPLLVILHFIQLFFINHVILTDTFIGYLVGNTLWLIAVGYYIYVTFLGYSALPFLKNTVVLLYPFAPLIVLYGLSLALGWNFTHTLCSFYKYRVK.

M1 carries the post-translational modification N-acetylmethionine. Residues 1 to 82 lie on the Cytoplasmic side of the membrane; the sequence is MLPSTSLNSS…TKDQWARDDP (82 aa). At S6 the chain carries Phosphoserine. The chain crosses the membrane as a helical span at residues 83–103; it reads AFLVLLSIWLCVSTIGFGFVL. The Lumenal segment spans residues 104 to 115; that stretch reads DMGFFETIKLLL. The chain crosses the membrane as a helical span at residues 116–136; it reads WVVFIDCVGVGLLISTLMWFI. Over 137–163 the chain is Cytoplasmic; sequence SNKYLVKRQSRDYDVEWGYAFDVHLNA. A helical membrane pass occupies residues 164–184; sequence FYPLLVILHFIQLFFINHVIL. Over 185–187 the chain is Lumenal; the sequence is TDT. Residues 188–208 form a helical membrane-spanning segment; the sequence is FIGYLVGNTLWLIAVGYYIYV. The Cytoplasmic portion of the chain corresponds to 209-222; sequence TFLGYSALPFLKNT. A helical membrane pass occupies residues 223–243; it reads VVLLYPFAPLIVLYGLSLALG. The Lumenal portion of the chain corresponds to 244–259; sequence WNFTHTLCSFYKYRVK.

This sequence belongs to the unc-50 family. As to expression, expressed in brain, kidney and testis, and at lower levels in heart.

The protein localises to the nucleus inner membrane. It localises to the golgi apparatus membrane. In terms of biological role, involved in the cell surface expression of neuronal nicotinic receptors. Binds RNA. The polypeptide is Protein unc-50 homolog (Unc50) (Rattus norvegicus (Rat)).